A 62-amino-acid chain; its full sequence is Bowman-Birk type proteinase inhibitor B7 (62 aa).

Disulfide bonds link C5-C59, C6-C23, C13-C21, C30-C37, and C34-C51.

It belongs to the Bowman-Birk serine protease inhibitor family. In terms of tissue distribution, expressed in bulb (at protein level).

Serine protease inhibitor. Inhibits trypsin (Ki = 65 nM) and weakly inhibits chymotrypsin (Ki = 295 nM). Does not inhibit bacterial subtilisin. In Hyacinthus orientalis (Common hyacinth), this protein is Bowman-Birk type proteinase inhibitor B7.